The primary structure comprises 491 residues: Galactose-1-phosphate uridylyltransferase 1 (491 aa).

This sequence belongs to the galactose-1-phosphate uridylyltransferase type 2 family.

The protein resides in the cytoplasm. The catalysed reaction is alpha-D-galactose 1-phosphate + UDP-alpha-D-glucose = alpha-D-glucose 1-phosphate + UDP-alpha-D-galactose. The protein operates within carbohydrate metabolism; galactose metabolism. This chain is Galactose-1-phosphate uridylyltransferase 1 (galT1), found in Streptococcus pneumoniae serotype 4 (strain ATCC BAA-334 / TIGR4).